Here is a 265-residue protein sequence, read N- to C-terminus: Chorismate mutase 2 (265 aa).

The 256-residue stretch at 10 to 265 (GSGCSNVLSL…EVEYLLRRLD (256 aa)) folds into the Chorismate mutase domain.

In terms of assembly, homodimer. Expressed in roots, stems, cauline leaves and flowers, and at lower levels in rosette leaves and siliques.

It is found in the cytoplasm. It localises to the cytosol. The catalysed reaction is chorismate = prephenate. Its pathway is metabolic intermediate biosynthesis; prephenate biosynthesis; prephenate from chorismate: step 1/1. No allosteric regulation. This is Chorismate mutase 2 from Arabidopsis thaliana (Mouse-ear cress).